The chain runs to 404 residues: Nicotinate phosphoribosyltransferase (404 aa).

H224 bears the Phosphohistidine; by autocatalysis mark.

Belongs to the NAPRTase family. Post-translationally, transiently phosphorylated on a His residue during the reaction cycle. Phosphorylation strongly increases the affinity for substrates and increases the rate of nicotinate D-ribonucleotide production. Dephosphorylation regenerates the low-affinity form of the enzyme, leading to product release.

The catalysed reaction is nicotinate + 5-phospho-alpha-D-ribose 1-diphosphate + ATP + H2O = nicotinate beta-D-ribonucleotide + ADP + phosphate + diphosphate. Its pathway is cofactor biosynthesis; NAD(+) biosynthesis; nicotinate D-ribonucleotide from nicotinate: step 1/1. Its function is as follows. Catalyzes the synthesis of beta-nicotinate D-ribonucleotide from nicotinate and 5-phospho-D-ribose 1-phosphate at the expense of ATP. This is Nicotinate phosphoribosyltransferase from Proteus mirabilis (strain HI4320).